The following is a 388-amino-acid chain: Lipid-A-disaccharide synthase (388 aa).

The protein belongs to the LpxB family.

It catalyses the reaction a lipid X + a UDP-2-N,3-O-bis[(3R)-3-hydroxyacyl]-alpha-D-glucosamine = a lipid A disaccharide + UDP + H(+). It functions in the pathway bacterial outer membrane biogenesis; LPS lipid A biosynthesis. Functionally, condensation of UDP-2,3-diacylglucosamine and 2,3-diacylglucosamine-1-phosphate to form lipid A disaccharide, a precursor of lipid A, a phosphorylated glycolipid that anchors the lipopolysaccharide to the outer membrane of the cell. The polypeptide is Lipid-A-disaccharide synthase (Burkholderia thailandensis (strain ATCC 700388 / DSM 13276 / CCUG 48851 / CIP 106301 / E264)).